The following is a 212-amino-acid chain: Ras-related protein Rab-2A (212 aa).

Alanine 2 bears the N-acetylalanine mark. Positions 2–19 are required for interaction with PRKCI; that stretch reads AYAYLFKYIIIGDTGVGK. GTP contacts are provided by glycine 16, valine 17, glycine 18, lysine 19, serine 20, cysteine 21, and threonine 38. Serine 20 contributes to the Mg(2+) binding site. The Switch 1 motif lies at 37–42; it reads LTIGVE. Mg(2+) is bound by residues threonine 38 and aspartate 61. Positions 63–72 match the Switch 2 motif; it reads AGQESFRSIT. Residues glycine 64, asparagine 119, lysine 120, aspartate 122, alanine 150, and lysine 151 each coordinate GTP. The interval 190–212 is disordered; it reads QHAATNASHGSNQGGQQAGGGCC. Gly residues predominate over residues 201 to 212; that stretch reads NQGGQQAGGGCC. 2 S-geranylgeranyl cysteine lipidation sites follow: cysteine 211 and cysteine 212.

This sequence belongs to the small GTPase superfamily. Rab family. In terms of assembly, interacts with PRKCI. Interacts with TRIP11. Interacts (in GTP-bound form) with GARIN1B. Interacts (GTP-bound) with HOPS complex component VPS39; interaction contributes to obtaining a functional HOPS complex that promotes autophagosome-lysosome membrane fusion driven by STX17-SNAP29-VAMP8. Interacts with VPS41. Mg(2+) is required as a cofactor. Prenylated. Prenylation is required for association with cellular membranes.

The protein resides in the endoplasmic reticulum-Golgi intermediate compartment membrane. It localises to the melanosome. The protein localises to the endoplasmic reticulum membrane. It is found in the golgi apparatus membrane. Its subcellular location is the cytoplasmic vesicle. The protein resides in the secretory vesicle. It localises to the acrosome. The protein localises to the autophagosome membrane. It catalyses the reaction GTP + H2O = GDP + phosphate + H(+). Regulated by guanine nucleotide exchange factors (GEFs) which promote the exchange of bound GDP for free GTP, GTPase activating proteins (GAPs) which increase the GTP hydrolysis activity, and GDP dissociation inhibitors (GDIs) which inhibit the dissociation of the nucleotide from the GTPase. The small GTPases Rab are key regulators of intracellular membrane trafficking, from the formation of transport vesicles to their fusion with membranes. Rabs cycle between active GTP-bound and inactive GDP-bound states. In their active state, drive transport of vesicular carriers from donor organelles to acceptor organelles to regulate the membrane traffic that maintains organelle identity and morphology. RAB2A regulates autophagy by promoting autophagosome-lysosome fusion via recruitment of the HOPS endosomal tethering complex; this process involves autophagosomal RAB2A and lysosomal RAB39A recruitment of HOPS subcomplexes VPS39-VPS11 and VPS41-VPS16-VPS18-VPS33A, respectively, which assemble into a functional complex to mediate membrane tethering and SNAREs-driven membrane fusion. Required for protein transport from the endoplasmic reticulum to the Golgi complex. Regulates the compacted morphology of the Golgi. Together with RAB2B, redundantly required for efficient autophagic flux. In Mus musculus (Mouse), this protein is Ras-related protein Rab-2A.